Reading from the N-terminus, the 269-residue chain is Fructose-2,6-bisphosphatase TIGAR (269 aa).

Residue His-11 is the Tele-phosphohistidine intermediate of the active site. The active-site Proton donor/acceptor is the Glu-89.

Belongs to the phosphoglycerate mutase family. As to quaternary structure, interacts with HK2; the interaction increases hexokinase HK2 activity in a hypoxia- and HIF1A-dependent manner, resulting in the regulation of mitochondrial membrane potential, thus increasing NADPH production and decreasing intracellular ROS levels. Expressed in olfactory bulb, cerebellum, and cortex. Expressed in neurons and astrocytes (at protein level). Expressed in intestinal crypt.

The protein resides in the cytoplasm. Its subcellular location is the nucleus. It localises to the mitochondrion. It catalyses the reaction beta-D-fructose 2,6-bisphosphate + H2O = beta-D-fructose 6-phosphate + phosphate. Functionally, fructose-bisphosphatase hydrolyzing fructose-2,6-bisphosphate as well as fructose-1,6-bisphosphate. Acts as a negative regulator of glycolysis by lowering intracellular levels of fructose-2,6-bisphosphate in a p53/TP53-dependent manner, resulting in the pentose phosphate pathway (PPP) activation and NADPH production. Contributes to the generation of reduced glutathione to cause a decrease in intracellular reactive oxygen species (ROS) content, correlating with its ability to protect cells from oxidative or metabolic stress-induced cell death. Plays a role in promoting protection against cell death during hypoxia by decreasing mitochondria ROS levels in a HK2-dependent manner through a mechanism that is independent of its fructose-bisphosphatase activity. In response to cardiac damage stress, mediates p53-induced inhibition of myocyte mitophagy through ROS levels reduction and the subsequent inactivation of BNIP3. Reduced mitophagy results in an enhanced apoptotic myocyte cell death, and exacerbates cardiac damage. Plays a role in adult intestinal regeneration; contributes to the growth, proliferation and survival of intestinal crypts following tissue ablation. Plays a neuroprotective role against ischemic brain damage by enhancing PPP flux and preserving mitochondria functions. Protects glioma cells from hypoxia- and ROS-induced cell death by inhibiting glycolysis and activating mitochondrial energy metabolism and oxygen consumption in a TKTL1-dependent and p53/TP53-independent manner. Plays a role in cancer cell survival by promoting DNA repair through activating PPP flux in a CDK5-ATM-dependent signaling pathway during hypoxia and/or genome stress-induced DNA damage responses. Involved in intestinal tumor progression. The protein is Fructose-2,6-bisphosphatase TIGAR of Mus musculus (Mouse).